Here is a 316-residue protein sequence, read N- to C-terminus: PHD finger protein 20-like protein 1 (316 aa).

The region spanning 11-71 (ITFEIGARLE…SNRLRPLERP (61 aa)) is the Tudor 1 domain. Glycyl lysine isopeptide (Lys-Gly) (interchain with G-Cter in SUMO2) cross-links involve residues lysine 75 and lysine 79. Residues 85–141 (FDFKAGEEVLARWTDCRYYPAKIEAINKEGTFTVQFYDGVIRCLKRMHIKAMPEDAK) form the Tudor 2 domain. The segment at 183–237 (AKNKTGNKPRTSANSNKDKEKDERKWFKVPSKKEETSTSITTPEVEKKEDLPTSS) is disordered. Polar residues predominate over residues 186–197 (KTGNKPRTSANS). The segment covering 198-218 (NKDKEKDERKWFKVPSKKEET) has biased composition (basic and acidic residues).

Interacts with methylated DNMT1 (DNMT1K142me1). Interacts with SOX2.

The protein resides in the nucleus. Is a negative regulator of proteasomal degradation of a set of methylated proteins, including DNMT1 and SOX2. Involved in the maintainance of embryonic stem cells pluripotency, through the regulation of SOX2 levels. The sequence is that of PHD finger protein 20-like protein 1 (PHF20L1) from Bos taurus (Bovine).